The primary structure comprises 185 residues: MSRLLEESLKTCPIVKRGEYHYFIHPISDGVPLVKPELLRDVSTRVIKMIDTDIDKIVTAEAMGIPIVTAVSIATDIPYVIMRKREYLLEGEIPVHQETGYSKGELYLNGINKGDKVVILDDVISTGGTLVAIINALKRAGADIKDVLCIIDRGNGQNVVEEKTGYKVKTLVKIEVVDGKVQILE.

Belongs to the purine/pyrimidine phosphoribosyltransferase family. Archaeal HPRT subfamily. In terms of assembly, homodimer.

It is found in the cytoplasm. It carries out the reaction IMP + diphosphate = hypoxanthine + 5-phospho-alpha-D-ribose 1-diphosphate. The catalysed reaction is GMP + diphosphate = guanine + 5-phospho-alpha-D-ribose 1-diphosphate. The protein operates within purine metabolism; IMP biosynthesis via salvage pathway; IMP from hypoxanthine: step 1/1. Functionally, catalyzes a salvage reaction resulting in the formation of IMP that is energically less costly than de novo synthesis. This chain is Hypoxanthine/guanine phosphoribosyltransferase, found in Methanococcus maripaludis (strain C7 / ATCC BAA-1331).